The primary structure comprises 541 residues: Putative nucleobase-ascorbate transporter 10 (541 aa).

12 consecutive transmembrane segments (helical) span residues 52–72 (LLSL…MGGG), 79–99 (VIQT…FFGT), 101–121 (LPVI…IIYS), 141–161 (IQGA…LGVW), 173–193 (IAPL…PLLA), 196–216 (VEVG…LPRF), 235–255 (GMIL…SSGV), 299–319 (SFAM…LFYA), 376–396 (RVIQ…KFGA), 397–417 (FFAS…LCFV), 433–453 (FNIK…PQYF), and 476–496 (VIFM…DCTL).

This sequence belongs to the nucleobase:cation symporter-2 (NCS2) (TC 2.A.40) family.

The protein resides in the membrane. This chain is Putative nucleobase-ascorbate transporter 10 (NAT10), found in Arabidopsis thaliana (Mouse-ear cress).